A 152-amino-acid polypeptide reads, in one-letter code: Large ribosomal subunit protein uL13 (152 aa).

It belongs to the universal ribosomal protein uL13 family. Part of the 50S ribosomal subunit.

Functionally, this protein is one of the early assembly proteins of the 50S ribosomal subunit, although it is not seen to bind rRNA by itself. It is important during the early stages of 50S assembly. This chain is Large ribosomal subunit protein uL13, found in Neorickettsia sennetsu (strain ATCC VR-367 / Miyayama) (Ehrlichia sennetsu).